Consider the following 136-residue polypeptide: Small ribosomal subunit protein bS16 (136 aa).

The span at 113–122 (LALKSHRRSA) shows a compositional bias: basic residues. A disordered region spans residues 113-136 (LALKSHRRSAKKEAEAKAATGGEA).

The protein belongs to the bacterial ribosomal protein bS16 family.

The polypeptide is Small ribosomal subunit protein bS16 (Pelodictyon phaeoclathratiforme (strain DSM 5477 / BU-1)).